The chain runs to 468 residues: Na(+)/H(+) antiporter NhaA (468 aa).

12 helical membrane passes run 28–48, 79–99, 115–135, 143–163, 173–193, 196–216, 219–239, 240–260, 317–337, 356–376, 392–412, and 426–446; these read FLHV…IALV, LHFW…GMEI, ALPL…YLAF, AGWA…LALL, IFLL…IAFF, GGLD…VLGL, IGIG…TGLL, MTGA…PVVP, ALHP…NAGV, VAGA…WLLV, IVLI…IAML, and LGVL…GAIY.

It belongs to the NhaA Na(+)/H(+) (TC 2.A.33) antiporter family.

The protein localises to the cell inner membrane. The enzyme catalyses Na(+)(in) + 2 H(+)(out) = Na(+)(out) + 2 H(+)(in). Na(+)/H(+) antiporter that extrudes sodium in exchange for external protons. This Bordetella petrii (strain ATCC BAA-461 / DSM 12804 / CCUG 43448) protein is Na(+)/H(+) antiporter NhaA.